Reading from the N-terminus, the 224-residue chain is Cytochrome c oxidase subunit 2 (224 aa).

The Mitochondrial intermembrane segment spans residues 1 to 26; it reads MSTWGQINLMDPASPIQMEMMLFHDH. The helical transmembrane segment at 27 to 48 threads the bilayer; that stretch reads AMAILIGIFTLVSLLGVKLCFN. Topologically, residues 49–62 are mitochondrial matrix; the sequence is TLSTRTMHEAQLLE. The chain crosses the membrane as a helical span at residues 63 to 82; the sequence is TLWTILPAFLLVWLALPSLR. Topologically, residues 83-224 are mitochondrial intermembrane; that stretch reads LLYLLDEQGS…DVKDFIKMCN (142 aa). Cu cation is bound by residues His161, Cys196, Glu198, Cys200, His204, and Met207. A Mg(2+)-binding site is contributed by Glu198.

Belongs to the cytochrome c oxidase subunit 2 family. Component of the cytochrome c oxidase (complex IV, CIV), a multisubunit enzyme composed of a catalytic core of 3 subunits and several supernumerary subunits. The complex exists as a monomer or a dimer and forms supercomplexes (SCs) in the inner mitochondrial membrane with ubiquinol-cytochrome c oxidoreductase (cytochrome b-c1 complex, complex III, CIII). Cu cation is required as a cofactor.

The protein resides in the mitochondrion inner membrane. It carries out the reaction 4 Fe(II)-[cytochrome c] + O2 + 8 H(+)(in) = 4 Fe(III)-[cytochrome c] + 2 H2O + 4 H(+)(out). Functionally, component of the cytochrome c oxidase, the last enzyme in the mitochondrial electron transport chain which drives oxidative phosphorylation. The respiratory chain contains 3 multisubunit complexes succinate dehydrogenase (complex II, CII), ubiquinol-cytochrome c oxidoreductase (cytochrome b-c1 complex, complex III, CIII) and cytochrome c oxidase (complex IV, CIV), that cooperate to transfer electrons derived from NADH and succinate to molecular oxygen, creating an electrochemical gradient over the inner membrane that drives transmembrane transport and the ATP synthase. Cytochrome c oxidase is the component of the respiratory chain that catalyzes the reduction of oxygen to water. Electrons originating from reduced cytochrome c in the intermembrane space (IMS) are transferred via the dinuclear copper A center (CU(A)) of subunit 2 and heme A of subunit 1 to the active site in subunit 1, a binuclear center (BNC) formed by heme A3 and copper B (CU(B)). The BNC reduces molecular oxygen to 2 water molecules using 4 electrons from cytochrome c in the IMS and 4 protons from the mitochondrial matrix. The sequence is that of Cytochrome c oxidase subunit 2 (COII) from Albinaria caerulea (Land snail).